The primary structure comprises 253 residues: Small ribosomal subunit protein uS3 (253 aa).

The KH type-2 domain occupies 38 to 106 (IRKYIHARLS…EVQINIFEIK (69 aa)). Positions 216 to 253 (AGMDKKQAGQGGGKGGDSPRGDRKPFNKGGKPDARKRK) are disordered. The span at 232-253 (DSPRGDRKPFNKGGKPDARKRK) shows a compositional bias: basic and acidic residues.

This sequence belongs to the universal ribosomal protein uS3 family. As to quaternary structure, part of the 30S ribosomal subunit. Forms a tight complex with proteins S10 and S14.

Functionally, binds the lower part of the 30S subunit head. Binds mRNA in the 70S ribosome, positioning it for translation. The sequence is that of Small ribosomal subunit protein uS3 from Flavobacterium psychrophilum (strain ATCC 49511 / DSM 21280 / CIP 103535 / JIP02/86).